The chain runs to 214 residues: UPF0301 protein NFA_55110 (214 aa).

The segment at 1-24 (MARADDPDERKTQGGHGDRRRREF) is disordered.

It belongs to the UPF0301 (AlgH) family.

The chain is UPF0301 protein NFA_55110 from Nocardia farcinica (strain IFM 10152).